The chain runs to 209 residues: Octanoyltransferase (209 aa).

Residues 30-209 (DNEPEIVYLV…IQTEFNKIFK (180 aa)) enclose the BPL/LPL catalytic domain. Substrate is bound by residues 69 to 76 (RGGKFTFH), 143 to 145 (AIG), and 156 to 158 (GIA). Cys-174 acts as the Acyl-thioester intermediate in catalysis.

This sequence belongs to the LipB family.

The protein localises to the cytoplasm. The enzyme catalyses octanoyl-[ACP] + L-lysyl-[protein] = N(6)-octanoyl-L-lysyl-[protein] + holo-[ACP] + H(+). The protein operates within protein modification; protein lipoylation via endogenous pathway; protein N(6)-(lipoyl)lysine from octanoyl-[acyl-carrier-protein]: step 1/2. Functionally, catalyzes the transfer of endogenously produced octanoic acid from octanoyl-acyl-carrier-protein onto the lipoyl domains of lipoate-dependent enzymes. Lipoyl-ACP can also act as a substrate although octanoyl-ACP is likely to be the physiological substrate. In Rickettsia prowazekii (strain Madrid E), this protein is Octanoyltransferase.